The primary structure comprises 148 residues: MGGVTVRDVDAQKFIVAYAAFLKRQGKLPIPGWVDTVKTSASNELPPQDADWYYVRAAAVARHIYLRKTVGVGRLRKVHGSTKNRGSRPAHHVDASGAVDRKVLQSLEKIGVLEQDEEKGGRRITQSGQRDLDRIAKTTVDEEEEDDE.

Residues 79-90 (HGSTKNRGSRPA) are compositionally biased toward basic residues. 2 disordered regions span residues 79-98 (HGSTKNRGSRPAHHVDASGA) and 116-148 (DEEKGGRRITQSGQRDLDRIAKTTVDEEEEDDE). The segment covering 130-140 (RDLDRIAKTTV) has biased composition (basic and acidic residues).

Belongs to the eukaryotic ribosomal protein eS19 family.

The polypeptide is Small ribosomal subunit protein eS19 (rps19) (Emericella nidulans (strain FGSC A4 / ATCC 38163 / CBS 112.46 / NRRL 194 / M139) (Aspergillus nidulans)).